A 191-amino-acid polypeptide reads, in one-letter code: Holliday junction branch migration complex subunit RuvA (191 aa).

Positions 1-64 (MIGSITGNVE…DNITQLYGFL (64 aa)) are domain I. The tract at residues 65–142 (NRQEQDYLKM…KMPIEETFSI (78 aa)) is domain II. The tract at residues 143-146 (IEND) is flexible linker. The domain III stretch occupies residues 146–191 (DDSLAALISLGYEKLKAFNVIQEIKSKTPDASTQEVIRKALQKLSQ).

The protein belongs to the RuvA family. Homotetramer. Forms an RuvA(8)-RuvB(12)-Holliday junction (HJ) complex. HJ DNA is sandwiched between 2 RuvA tetramers; dsDNA enters through RuvA and exits via RuvB. An RuvB hexamer assembles on each DNA strand where it exits the tetramer. Each RuvB hexamer is contacted by two RuvA subunits (via domain III) on 2 adjacent RuvB subunits; this complex drives branch migration. In the full resolvosome a probable DNA-RuvA(4)-RuvB(12)-RuvC(2) complex forms which resolves the HJ.

The protein localises to the cytoplasm. In terms of biological role, the RuvA-RuvB-RuvC complex processes Holliday junction (HJ) DNA during genetic recombination and DNA repair, while the RuvA-RuvB complex plays an important role in the rescue of blocked DNA replication forks via replication fork reversal (RFR). RuvA specifically binds to HJ cruciform DNA, conferring on it an open structure. The RuvB hexamer acts as an ATP-dependent pump, pulling dsDNA into and through the RuvAB complex. HJ branch migration allows RuvC to scan DNA until it finds its consensus sequence, where it cleaves and resolves the cruciform DNA. The chain is Holliday junction branch migration complex subunit RuvA from Ehrlichia ruminantium (strain Welgevonden).